The primary structure comprises 348 residues: Probable dual-specificity RNA methyltransferase RlmN (348 aa).

Glu-89 functions as the Proton acceptor in the catalytic mechanism. One can recognise a Radical SAM core domain in the interval 95–328 (HKNRNTVCVS…VTLRISYGSR (234 aa)). A disulfide bridge connects residues Cys-102 and Cys-333. 3 residues coordinate [4Fe-4S] cluster: Cys-109, Cys-113, and Cys-116. S-adenosyl-L-methionine contacts are provided by residues 159 to 160 (GE), Ser-191, 214 to 216 (SLH), and Asn-290. Cys-333 (S-methylcysteine intermediate) is an active-site residue.

Belongs to the radical SAM superfamily. RlmN family. It depends on [4Fe-4S] cluster as a cofactor.

The protein resides in the cytoplasm. The catalysed reaction is adenosine(2503) in 23S rRNA + 2 reduced [2Fe-2S]-[ferredoxin] + 2 S-adenosyl-L-methionine = 2-methyladenosine(2503) in 23S rRNA + 5'-deoxyadenosine + L-methionine + 2 oxidized [2Fe-2S]-[ferredoxin] + S-adenosyl-L-homocysteine. It catalyses the reaction adenosine(37) in tRNA + 2 reduced [2Fe-2S]-[ferredoxin] + 2 S-adenosyl-L-methionine = 2-methyladenosine(37) in tRNA + 5'-deoxyadenosine + L-methionine + 2 oxidized [2Fe-2S]-[ferredoxin] + S-adenosyl-L-homocysteine. Its function is as follows. Specifically methylates position 2 of adenine 2503 in 23S rRNA and position 2 of adenine 37 in tRNAs. This Dictyoglomus thermophilum (strain ATCC 35947 / DSM 3960 / H-6-12) protein is Probable dual-specificity RNA methyltransferase RlmN.